Reading from the N-terminus, the 374-residue chain is MNLQHTPLHDLCRDAGGRMVPFAGWDMPVQFSGLLQEHQAVRQQVGMFDISHMGVLRLEGTNPKDTLQALVPTDLNRIGPGEACYTVLLNETGGILDDLVVYDLGTNKQDSQSLLIVINAACSETDTIWLKQHLQPAGIALSDAKNNGVLLALQGPQATKVLERLSGESLASLPRFGHRQVQFYGLGAEDPSSVFIARTGYTGEDGFELLLEAEAGRALWLQLRAEGVIPCGLGSRDTLRLEAAMHLYGQDMDINTTPFEAGLGWLVHLEMPAPFMGRTALEQQAEQGPIRRLVGLKLSGRAIARHGYPLLHNNNKVGEITSGTWSPSLGEAIALGYLPTALARIGNEVAVEIRGKHHPATVVKRPFYRRPSLS.

The protein belongs to the GcvT family. As to quaternary structure, the glycine cleavage system is composed of four proteins: P, T, L and H.

The enzyme catalyses N(6)-[(R)-S(8)-aminomethyldihydrolipoyl]-L-lysyl-[protein] + (6S)-5,6,7,8-tetrahydrofolate = N(6)-[(R)-dihydrolipoyl]-L-lysyl-[protein] + (6R)-5,10-methylene-5,6,7,8-tetrahydrofolate + NH4(+). In terms of biological role, the glycine cleavage system catalyzes the degradation of glycine. The sequence is that of Aminomethyltransferase from Prochlorococcus marinus (strain MIT 9303).